A 92-amino-acid polypeptide reads, in one-letter code: UPF0297 protein TTE1249 (92 aa).

This sequence belongs to the UPF0297 family.

This is UPF0297 protein TTE1249 from Caldanaerobacter subterraneus subsp. tengcongensis (strain DSM 15242 / JCM 11007 / NBRC 100824 / MB4) (Thermoanaerobacter tengcongensis).